The following is a 123-amino-acid chain: Class I hydrophobin 2 (123 aa).

A signal peptide spans 1-16 (MYAYTVIAFLAASVAA). 4 disulfide bridges follow: C35/C97, C43/C91, C44/C72, and C98/C116.

It belongs to the fungal hydrophobin family.

It localises to the secreted. The protein localises to the cell wall. In terms of biological role, aerial growth, conidiation, and dispersal of filamentous fungi in the environment rely upon a capability of their secreting small amphipathic proteins called hydrophobins (HPBs) with low sequence identity. Class I can self-assemble into an outermost layer of rodlet bundles on aerial cell surfaces, conferring cellular hydrophobicity that supports fungal growth, development and dispersal; whereas Class II form highly ordered films at water-air interfaces through intermolecular interactions but contribute nothing to the rodlet structure. HYD1 and HYD2 are required for the structural integrity of the long aerial chains of microconidia. Does not seem to be important for the ability to cause seedling disease. In Gibberella moniliformis (Maize ear and stalk rot fungus), this protein is Class I hydrophobin 2.